The chain runs to 1177 residues: DNA-directed RNA polymerase subunit beta (1177 aa).

Residues 1154-1177 are disordered; that stretch reads RDTEDDDDHQSADKLNVEVETTKE. Positions 1162 to 1177 are enriched in basic and acidic residues; sequence HQSADKLNVEVETTKE.

This sequence belongs to the RNA polymerase beta chain family. As to quaternary structure, the RNAP catalytic core consists of 2 alpha, 1 beta, 1 beta' and 1 omega subunit. When a sigma factor is associated with the core the holoenzyme is formed, which can initiate transcription.

The catalysed reaction is RNA(n) + a ribonucleoside 5'-triphosphate = RNA(n+1) + diphosphate. In terms of biological role, DNA-dependent RNA polymerase catalyzes the transcription of DNA into RNA using the four ribonucleoside triphosphates as substrates. The polypeptide is DNA-directed RNA polymerase subunit beta (Bacillus mycoides (strain KBAB4) (Bacillus weihenstephanensis)).